A 214-amino-acid polypeptide reads, in one-letter code: Adenylate kinase (214 aa).

Position 10-15 (10-15 (GAGKGT)) interacts with ATP. An NMP region spans residues 30–59 (STGDMLRAAVKAGTPLGLEAKKVMDAGQLV). AMP-binding positions include Thr31, Arg36, 57–59 (QLV), 85–88 (GFPR), and Gln92. The segment at 122–159 (GRRVHPGSGRVYHVVFNPPKVEGKDDVTGEDLVIRPDD) is LID. Residues Arg123 and 132 to 133 (VY) each bind ATP. Arg156 and Arg167 together coordinate AMP. Gln200 provides a ligand contact to ATP.

This sequence belongs to the adenylate kinase family. As to quaternary structure, monomer.

It is found in the cytoplasm. It catalyses the reaction AMP + ATP = 2 ADP. Its pathway is purine metabolism; AMP biosynthesis via salvage pathway; AMP from ADP: step 1/1. Catalyzes the reversible transfer of the terminal phosphate group between ATP and AMP. Plays an important role in cellular energy homeostasis and in adenine nucleotide metabolism. This is Adenylate kinase from Shewanella amazonensis (strain ATCC BAA-1098 / SB2B).